Consider the following 557-residue polypeptide: Probable protein kinase UbiB (557 aa).

The Protein kinase domain maps to 121–509; that stretch reads SFDTVPLASA…RKLQTRVVTA (389 aa). ATP is bound by residues 127-135 and Lys-154; that span reads LASASIAQV. Asp-289 acts as the Proton acceptor in catalysis. A run of 2 helical transmembrane segments spans residues 506–526 and 535–555; these read VVTAITGSGLLVVAAVLYGLH and VPVWSWISGGAGSAALLVAWL.

This sequence belongs to the ABC1 family. UbiB subfamily.

The protein resides in the cell inner membrane. It functions in the pathway cofactor biosynthesis; ubiquinone biosynthesis [regulation]. In terms of biological role, is probably a protein kinase regulator of UbiI activity which is involved in aerobic coenzyme Q (ubiquinone) biosynthesis. The sequence is that of Probable protein kinase UbiB from Xanthomonas oryzae pv. oryzae (strain MAFF 311018).